The following is a 172-amino-acid chain: Inorganic pyrophosphatase (172 aa).

Residues lysine 28, arginine 42, and tyrosine 54 each contribute to the substrate site. Positions 64, 69, and 101 each coordinate Mg(2+). Tyrosine 140 contributes to the substrate binding site.

This sequence belongs to the PPase family. As to quaternary structure, homohexamer. Mg(2+) is required as a cofactor.

The protein resides in the cytoplasm. It carries out the reaction diphosphate + H2O = 2 phosphate + H(+). Catalyzes the hydrolysis of inorganic pyrophosphate (PPi) forming two phosphate ions. The chain is Inorganic pyrophosphatase from Campylobacter jejuni subsp. jejuni serotype O:2 (strain ATCC 700819 / NCTC 11168).